The sequence spans 259 residues: MFVPVGSEQDFPSVSTLLLPAISVGNVGQLAIDLIISTLNIPKVGYFYTDCLVPMVGNNPYETNEENAKELCTNAEVYALPSQKLAVLQLRSLVIKKKSKSFRQALVSWIKRCAFARVIFLSSCHAYHRDDKQLFGTPFRYLVTPALQKSVADVLSELEWKEMEKVSSYPELNDNEKKLFIPGGGFTKAFYNDCCLEDLQMAVVLKFCSEGDNVPDAFSLLNQVNEWLHLVEPTNGDVKWKSPRSWRLLFGSGLPPAIF.

The protein belongs to the PSMG2 family. In terms of assembly, forms a heterodimer with psmg1. Post-translationally, degraded by the proteasome upon completion of 20S proteasome maturation.

It is found in the nucleus. Chaperone protein which promotes assembly of the 20S proteasome as part of a heterodimer with psmg1. This is Proteasome assembly chaperone 2 from Xenopus laevis (African clawed frog).